The chain runs to 570 residues: A-type ATP synthase subunit A (570 aa).

An ATP-binding site is contributed by 223–230 (GPFGSGKT).

It belongs to the ATPase alpha/beta chains family. As to quaternary structure, has multiple subunits with at least A(3), B(3), C, D, E, F, H, I and proteolipid K(x).

The protein resides in the cell membrane. The catalysed reaction is ATP + H2O + 4 H(+)(in) = ADP + phosphate + 5 H(+)(out). Its function is as follows. Component of the A-type ATP synthase that produces ATP from ADP in the presence of a proton gradient across the membrane. The A chain is the catalytic subunit. This Nanoarchaeum equitans (strain Kin4-M) protein is A-type ATP synthase subunit A.